Consider the following 154-residue polypeptide: Large ribosomal subunit protein uL13 (154 aa).

Belongs to the universal ribosomal protein uL13 family. As to quaternary structure, part of the 50S ribosomal subunit.

This protein is one of the early assembly proteins of the 50S ribosomal subunit, although it is not seen to bind rRNA by itself. It is important during the early stages of 50S assembly. This chain is Large ribosomal subunit protein uL13, found in Rhizobium leguminosarum bv. trifolii (strain WSM2304).